A 264-amino-acid polypeptide reads, in one-letter code: S-adenosylmethionine decarboxylase proenzyme (264 aa).

Residue Ser-112 is the Schiff-base intermediate with substrate; via pyruvic acid of the active site. Residue Ser-112 is modified to Pyruvic acid (Ser); by autocatalysis. Residue His-117 is the Proton acceptor; for processing activity of the active site. The active-site Proton donor; for catalytic activity is Cys-140.

This sequence belongs to the prokaryotic AdoMetDC family. Type 2 subfamily. Heterooctamer of four alpha and four beta chains arranged as a tetramer of alpha/beta heterodimers. Requires pyruvate as cofactor. Post-translationally, is synthesized initially as an inactive proenzyme. Formation of the active enzyme involves a self-maturation process in which the active site pyruvoyl group is generated from an internal serine residue via an autocatalytic post-translational modification. Two non-identical subunits are generated from the proenzyme in this reaction, and the pyruvate is formed at the N-terminus of the alpha chain, which is derived from the carboxyl end of the proenzyme. The post-translation cleavage follows an unusual pathway, termed non-hydrolytic serinolysis, in which the side chain hydroxyl group of the serine supplies its oxygen atom to form the C-terminus of the beta chain, while the remainder of the serine residue undergoes an oxidative deamination to produce ammonia and the pyruvoyl group blocking the N-terminus of the alpha chain.

It carries out the reaction S-adenosyl-L-methionine + H(+) = S-adenosyl 3-(methylsulfanyl)propylamine + CO2. It functions in the pathway amine and polyamine biosynthesis; S-adenosylmethioninamine biosynthesis; S-adenosylmethioninamine from S-adenosyl-L-methionine: step 1/1. Catalyzes the decarboxylation of S-adenosylmethionine to S-adenosylmethioninamine (dcAdoMet), the propylamine donor required for the synthesis of the polyamines spermine and spermidine from the diamine putrescine. The sequence is that of S-adenosylmethionine decarboxylase proenzyme from Escherichia coli O45:K1 (strain S88 / ExPEC).